A 288-amino-acid chain; its full sequence is Serine/threonine-protein acetyltransferase YopJ (288 aa).

Residues His109 and Glu128 contribute to the active site. His109 serves as a coordination point for CoA. Residue 167–168 coordinates CoA; that stretch reads RS. Cys172 is a catalytic residue. 1D-myo-inositol hexakisphosphate contacts are provided by residues 182–185 and 224–225; these read KLYI and KH. 227 to 230 provides a ligand contact to CoA; it reads QGKK. Arg257 lines the 1D-myo-inositol hexakisphosphate pocket. Position 266 to 270 (266 to 270) interacts with CoA; the sequence is DGKEL.

The protein belongs to the acetyltransferase YopJ family. It depends on 1D-myo-inositol hexakisphosphate as a cofactor.

It is found in the secreted. It carries out the reaction L-threonyl-[protein] + acetyl-CoA = O-acetyl-L-threonyl-[protein] + CoA. The enzyme catalyses L-seryl-[protein] + acetyl-CoA = O-acetyl-L-seryl-[protein] + CoA. With respect to regulation, 1D-myo-inositol hexakisphosphate activates protein-acetyltransferase activity via an allosteric mechanism: 1D-myo-inositol hexakisphosphate-binding induces a conformational rearrangement that stimulates the interaction with acetyl-CoA. Its function is as follows. Serine/threonine-protein acetyltransferase translocated into infected cells, which inhibits the host immune response and induces cell death by mediating acetylation of target proteins. Inhibits the MAPK and NF-kappa-B signaling pathways by acetylating protein-kinases such as MAP2K1, MAP2K6, MAP3K7/TAK1 and I-kappa-B kinase (CHUK/IKKA and IKBKB) on serine and threonine residues critical for their activation by phosphorylation, thereby preventing protein-kinase activation. Promotes pyroptosis, a programmed cell death, in host cells by mediating acetylation of MAP3K7/TAK1: MAP3K7/TAK1 inactivation triggers activation of caspase-8 (CASP8), followed by CASP8-dependent cleavage of gasdermin-D (GSDMD) and induction of pyroptosis. The sequence is that of Serine/threonine-protein acetyltransferase YopJ from Yersinia pestis.